Here is a 195-residue protein sequence, read N- to C-terminus: CASP-like protein Os03g0196400 (195 aa).

Residues 1–38 are Cytoplasmic-facing; it reads MRQQQAGGVGDGVSPGNVPVCYYGPGGRVPSSLERRAR. A helical transmembrane segment spans residues 39 to 59; that stretch reads AAEVLLRCAACGLAVLAAALL. Residues 60–81 are Extracellular-facing; it reads GADRQTRVFFSIQKVARYTDMQ. The chain crosses the membrane as a helical span at residues 82 to 102; sequence SLVLLVIANGMAACYSLIQCA. The Cytoplasmic portion of the chain corresponds to 103 to 104; that stretch reads RC. A helical transmembrane segment spans residues 105 to 125; it reads LVMAYIVISAVAAAMEAALIG. Residues 126–150 are Extracellular-facing; the sequence is KYGQPEFQWMKTCHLYKRFCAQAGG. The chain crosses the membrane as a helical span at residues 151 to 171; sequence GVACAIAASVNMVGVALISAF. Topologically, residues 172 to 195 are cytoplasmic; the sequence is NLFRLYGNSNGGGKATTTTMAGGK.

Belongs to the Casparian strip membrane proteins (CASP) family. In terms of assembly, homodimer and heterodimers.

It localises to the cell membrane. In Oryza sativa subsp. japonica (Rice), this protein is CASP-like protein Os03g0196400.